We begin with the raw amino-acid sequence, 549 residues long: MEKGIKKYLPSLPFLACISDFPENHGTSRRSATVSLERVHELFTEHWLSNLKNRREKRQELAEEAVYCRSEMLSQRKLLAAVDFPQQLKNSPAKAKATHTSSGVTKEVRASKKYTSSNVEFPLVTDGKEKPVKSKQLRKNSVTEFEKPIETKKSKHRKSRNKFLDKSSGSMEIESWDNSTSDSIIESSSRLHESISLRENDIRSSDSKSVGWDDNSTGFRESSKSLDHTDTSMFMELDSNSDPQFRPKYQAKSSWFAPDDPEASWGNLDDGWGETNGSWSSTDDTKHYKNEWAESINLDNFNRPSQQEDYDKPKNTQVSRSSNHHRRYDSYHPDSRSDSYRSKREHYDNRDTGPRSKHLEKSSYVYNQNFEDRTHLSDHGAHFHLGNANDFNMQGSSRKRKASDRQRESRENELPTKKLNASDSHNPLASLTTDKNDLYINWLKSLSFFQTNSSCAEALVKVIPHYHNKLIDFSQVLQLVFSASEKFPIQENQPLPEQLMFLSNLEKQTPFAKAVGSSIYKLVTGKNLSLDFASQILKEASILEHKNEK.

Disordered regions lie at residues 89–111 (KNSP…VRAS), 126–184 (DGKE…SDSI), 202–225 (IRSS…SSKS), 298–361 (LDNF…HLEK), and 381–430 (AHFH…PLAS). The span at 298–307 (LDNFNRPSQQ) shows a compositional bias: polar residues. Basic and acidic residues-rich tracts occupy residues 328-361 (YDSY…HLEK) and 403-416 (SDRQ…ELPT). Residues 419-430 (LNASDSHNPLAS) are compositionally biased toward polar residues.

In terms of assembly, ago1, chp1 and tas3 interact to form the core of the RNA-induced transcriptional silencing (RITS) complex. The RITS complex interacts with the RDRC complex via interaction between ago1 and hrr1. Clr4 has a role in mediating this interaction.

It is found in the nucleus. The protein localises to the cytoplasm. It localises to the cytoskeleton. The protein resides in the microtubule organizing center. Its subcellular location is the spindle pole body. Functionally, has a role in the RNA interference (RNAi) pathway which is important for heterochromatin formation and accurate chromosome segregation. A member of the RNA-induced transcriptional silencing (RITS) complex which is involved in the biosynthesis of dsRNA from primer siRNAs provided by the RNA-directed RNA polymerase (RDRC) complex. The sequence is that of RNA-induced transcriptional silencing complex protein tas3 (tas3) from Schizosaccharomyces pombe (strain 972 / ATCC 24843) (Fission yeast).